Consider the following 225-residue polypeptide: tRNA (guanine-N(1)-)-methyltransferase (225 aa).

S-adenosyl-L-methionine contacts are provided by residues Gly110 and 130–135 (VGDYVL).

The protein belongs to the RNA methyltransferase TrmD family. In terms of assembly, homodimer.

The protein resides in the cytoplasm. It catalyses the reaction guanosine(37) in tRNA + S-adenosyl-L-methionine = N(1)-methylguanosine(37) in tRNA + S-adenosyl-L-homocysteine + H(+). Specifically methylates guanosine-37 in various tRNAs. This is tRNA (guanine-N(1)-)-methyltransferase from Neorickettsia sennetsu (strain ATCC VR-367 / Miyayama) (Ehrlichia sennetsu).